The following is a 910-amino-acid chain: DNA repair and recombination protein RAD54B (910 aa).

A compositionally biased stretch (polar residues) spans 1–14 (MRRSAAPSQLQGNS). The disordered stretch occupies residues 1-33 (MRRSAAPSQLQGNSFKKPKFIPPGRSNPGLNEE). A Phosphoserine modification is found at serine 14. The 168-residue stretch at 313–480 (GMRMNGRCGA…FALIDFVNPG (168 aa)) folds into the Helicase ATP-binding domain. 326 to 333 (DEMGLGKT) serves as a coordination point for ATP. A DEGH box motif is present at residues 431–434 (DEGH). The 162-residue stretch at 649 to 810 (KLLAVIHELR…HIQFSVEELK (162 aa)) folds into the Helicase C-terminal domain.

This sequence belongs to the SNF2/RAD54 helicase family. In terms of assembly, interacts with RAD51 through the NH2-terminal domain. Immunoprecipitation experiments show that the interaction is constitutive and not induced by ionizing radiation. The interaction may be indirect. Abundantly expressed in testis and spleen. Relatively low levels observed in thymus, prostate, ovary and colon.

Its subcellular location is the nucleus. Its function is as follows. Involved in DNA repair and mitotic recombination. May play an active role in recombination processes in concert with other members of the RAD52 epistasis group. This is DNA repair and recombination protein RAD54B (RAD54B) from Homo sapiens (Human).